The chain runs to 400 residues: SEC14-like protein 3 (400 aa).

A CRAL-TRIO domain is found at 76 to 249 (PPEVIQKYMP…HFGGTLTDPD (174 aa)). At Ser223 the chain carries Phosphoserine. The 109-residue stretch at 275-383 (KTQYEHSVQI…AKKVSFTVEV (109 aa)) folds into the GOLD domain.

Post-translationally, the N-terminus seems to be blocked. In terms of tissue distribution, detected in a layer of supportive cells in olfactory epithelium, in the apical region of the trachea and in the surface layer of ciliated bronchial epithelium in the lung.

Functionally, probable hydrophobic ligand-binding protein; may play a role in the transport of hydrophobic ligands like tocopherol, squalene and phospholipids. This Rattus norvegicus (Rat) protein is SEC14-like protein 3 (Sec14l3).